The primary structure comprises 179 residues: Crossover junction endodeoxyribonuclease RuvC (179 aa).

Residues aspartate 14, glutamate 74, and aspartate 147 contribute to the active site. Mg(2+)-binding residues include aspartate 14, glutamate 74, and aspartate 147.

It belongs to the RuvC family. In terms of assembly, homodimer which binds Holliday junction (HJ) DNA. The HJ becomes 2-fold symmetrical on binding to RuvC with unstacked arms; it has a different conformation from HJ DNA in complex with RuvA. In the full resolvosome a probable DNA-RuvA(4)-RuvB(12)-RuvC(2) complex forms which resolves the HJ. Requires Mg(2+) as cofactor.

The protein resides in the cytoplasm. The enzyme catalyses Endonucleolytic cleavage at a junction such as a reciprocal single-stranded crossover between two homologous DNA duplexes (Holliday junction).. The RuvA-RuvB-RuvC complex processes Holliday junction (HJ) DNA during genetic recombination and DNA repair. Endonuclease that resolves HJ intermediates. Cleaves cruciform DNA by making single-stranded nicks across the HJ at symmetrical positions within the homologous arms, yielding a 5'-phosphate and a 3'-hydroxyl group; requires a central core of homology in the junction. The consensus cleavage sequence is 5'-(A/T)TT(C/G)-3'. Cleavage occurs on the 3'-side of the TT dinucleotide at the point of strand exchange. HJ branch migration catalyzed by RuvA-RuvB allows RuvC to scan DNA until it finds its consensus sequence, where it cleaves and resolves the cruciform DNA. In Rubrobacter xylanophilus (strain DSM 9941 / JCM 11954 / NBRC 16129 / PRD-1), this protein is Crossover junction endodeoxyribonuclease RuvC.